The primary structure comprises 336 residues: HTH-type transcriptional regulator CdhR (336 aa).

The region spanning 213 to 311 (VQVIGEMERH…AASPSQDRAV (99 aa)) is the HTH araC/xylS-type domain. DNA-binding regions (H-T-H motif) lie at residues 230-251 (LELA…RVHL) and 278-301 (VLQV…RARF). The tract at residues 305–336 (PSQDRAVLPLKAPAATPPGAPAGHRTPRAERG) is disordered.

Functionally, induces the transcription of the PA5384-PA5388 operon in response to carnitine. This operon is involved in the degradation of L-carnitine, and allows P.aeruginosa to grow on L-carnitine as the sole source of carbon and nitrogen. This chain is HTH-type transcriptional regulator CdhR (cdhR), found in Pseudomonas aeruginosa (strain ATCC 15692 / DSM 22644 / CIP 104116 / JCM 14847 / LMG 12228 / 1C / PRS 101 / PAO1).